Reading from the N-terminus, the 136-residue chain is Large ribosomal subunit protein bL17 (136 aa).

This sequence belongs to the bacterial ribosomal protein bL17 family. As to quaternary structure, part of the 50S ribosomal subunit. Contacts protein L32.

The chain is Large ribosomal subunit protein bL17 from Rickettsia canadensis (strain McKiel).